Reading from the N-terminus, the 243-residue chain is Ubiquinone biosynthesis O-methyltransferase (243 aa).

Residues R45, G65, D86, and L130 each contribute to the S-adenosyl-L-methionine site.

The protein belongs to the methyltransferase superfamily. UbiG/COQ3 family.

The enzyme catalyses a 3-demethylubiquinol + S-adenosyl-L-methionine = a ubiquinol + S-adenosyl-L-homocysteine + H(+). It carries out the reaction a 3-(all-trans-polyprenyl)benzene-1,2-diol + S-adenosyl-L-methionine = a 2-methoxy-6-(all-trans-polyprenyl)phenol + S-adenosyl-L-homocysteine + H(+). It participates in cofactor biosynthesis; ubiquinone biosynthesis. Its function is as follows. O-methyltransferase that catalyzes the 2 O-methylation steps in the ubiquinone biosynthetic pathway. In Idiomarina loihiensis (strain ATCC BAA-735 / DSM 15497 / L2-TR), this protein is Ubiquinone biosynthesis O-methyltransferase.